A 209-amino-acid chain; its full sequence is MARYCGPKNRVARRFGANIFGRSRNPLLKKPHPPGQHGMQRKKKSDYGLQLEEKQKLKACYGMIMEKQLVKAFKEVIHKQGNVAQMFLERFECRLDNMVYRMGFAKTIFAAQQLVAHGHILVNGRRVDRRSFFLRPGMQISLKEKSKRLQSVKDALESKDESSLPSYISLDKTGFKGELLVSPEQDQIEAQLPLPINISVVCEFLSHRT.

A disordered region spans residues 23–46 (SRNPLLKKPHPPGQHGMQRKKKSD). Residues 93 to 153 (CRLDNMVYRM…EKSKRLQSVK (61 aa)) form the S4 RNA-binding domain.

It belongs to the universal ribosomal protein uS4 family. As to quaternary structure, part of the 30S ribosomal subunit. Contacts protein S5. The interaction surface between S4 and S5 is involved in control of translational fidelity.

One of the primary rRNA binding proteins, it binds directly to 16S rRNA where it nucleates assembly of the body of the 30S subunit. Its function is as follows. With S5 and S12 plays an important role in translational accuracy. This Chlamydia pneumoniae (Chlamydophila pneumoniae) protein is Small ribosomal subunit protein uS4.